The following is a 772-amino-acid chain: uncharacterized protein (772 aa).

Transmembrane regions (helical) follow at residues 16–36 and 301–321; these read LITFFCLLSTIPVILVGLFSY and IGWITFAVCLILLTLSLLFSW. The HTH araC/xylS-type domain maps to 670–768; sequence DNIIHIIHHE…GITPGNYRQQ (99 aa). 2 DNA-binding regions (H-T-H motif) span residues 687–708 and 735–758; these read DEIARRLHYNPNYLSSIFKKEM and VKDIAEKLKYKNSQNFIRSFKKLE.

The protein resides in the cell membrane. This is an uncharacterized protein from Bacillus subtilis (strain 168).